The sequence spans 364 residues: 4-hydroxy-3-methylbut-2-en-1-yl diphosphate synthase (flavodoxin) (364 aa).

Residues Cys268, Cys271, Cys303, and Glu310 each contribute to the [4Fe-4S] cluster site.

It belongs to the IspG family. [4Fe-4S] cluster is required as a cofactor.

It carries out the reaction (2E)-4-hydroxy-3-methylbut-2-enyl diphosphate + oxidized [flavodoxin] + H2O + 2 H(+) = 2-C-methyl-D-erythritol 2,4-cyclic diphosphate + reduced [flavodoxin]. It participates in isoprenoid biosynthesis; isopentenyl diphosphate biosynthesis via DXP pathway; isopentenyl diphosphate from 1-deoxy-D-xylulose 5-phosphate: step 5/6. Functionally, converts 2C-methyl-D-erythritol 2,4-cyclodiphosphate (ME-2,4cPP) into 1-hydroxy-2-methyl-2-(E)-butenyl 4-diphosphate. This Desulfotalea psychrophila (strain LSv54 / DSM 12343) protein is 4-hydroxy-3-methylbut-2-en-1-yl diphosphate synthase (flavodoxin).